The chain runs to 89 residues: Elongation factor 1-beta (89 aa).

This sequence belongs to the EF-1-beta/EF-1-delta family.

In terms of biological role, promotes the exchange of GDP for GTP in EF-1-alpha/GDP, thus allowing the regeneration of EF-1-alpha/GTP that could then be used to form the ternary complex EF-1-alpha/GTP/AAtRNA. In Methanococcus aeolicus (strain ATCC BAA-1280 / DSM 17508 / OCM 812 / Nankai-3), this protein is Elongation factor 1-beta.